The following is a 260-amino-acid chain: CD27 antigen (260 aa).

The first 19 residues, 1-19 (MARPHPWWLCVLGTLVGLS), serve as a signal peptide directing secretion. The Extracellular portion of the chain corresponds to 20–191 (ATPAPKSCPE…RSLCSSDFIR (172 aa)). TNFR-Cys repeat units lie at residues 26 to 63 (SCPERHYWAQGKLCCQMCEPGTFLVKDCDQHRKAAQCD), 64 to 104 (PCIP…NAEC), and 105 to 141 (ACRNGWQCRDKECTECDPLPNPSLTARSSQALSPHPQ). Cystine bridges form between Cys27–Cys39, Cys40–Cys53, Cys43–Cys62, Cys65–Cys81, Cys84–Cys96, Cys87–Cys104, Cys106–Cys120, and Cys112–Cys117. Asn95 carries an N-linked (GlcNAc...) asparagine glycan. Residue Ser127 is glycosylated (O-linked (GalNAc...) serine). The chain crosses the membrane as a helical span at residues 192–212 (ILVIFSGMFLVFTLAGALFLH). The Cytoplasmic portion of the chain corresponds to 213–260 (QRRKYRSNKGESPVEPAEPCHYSCPREEEGSTIPIQEDYRKPEPACSP). Residue Ser219 is modified to Phosphoserine. The tract at residues 219 to 260 (SNKGESPVEPAEPCHYSCPREEEGSTIPIQEDYRKPEPACSP) is disordered. Over residues 249–260 (EDYRKPEPACSP) the composition is skewed to basic and acidic residues.

Homodimer. Interacts with SIVA1; may play a role in apoptosis through association with SIVA1. Interacts with TRAF2. Interacts ith PTPN6. In terms of processing, phosphorylated. N-glycosylated. Post-translationally, O-glycosylated with core 1 or possibly core 8 glycans. In terms of tissue distribution, found in most T-lymphocytes.

It localises to the cell membrane. In terms of biological role, costimulatory immune-checkpoint receptor expressed at the surface of T-cells, NK-cells and B-cells which binds to and is activated by its ligand CD70/CD27L expressed by B-cells. The CD70-CD27 signaling pathway mediates antigen-specific T-cell activation and expansion which in turn provides immune surveillance of B-cells. Mechanistically, CD70 ligation activates the TRAF2-PTPN6 axis that subsequently inhibits LCK phosphorylation to promote phenotypic and transcriptional adaptations of T-cell memory. In addition, activation by CD70 on early progenitor cells provides a negative feedback signal to leukocyte differentiation during immune activation and thus modulates hematopoiesis. Negatively regulates the function of Th2 lymphocytes in the adipose tissue. The chain is CD27 antigen from Homo sapiens (Human).